A 293-amino-acid polypeptide reads, in one-letter code: Vibriobactin-specific isochorismatase (293 aa).

Residues 211-287 (KLTGLSLRTM…QWWQTIQANL (77 aa)) enclose the Carrier domain. Position 248 is an O-(pantetheine 4'-phosphoryl)serine (Ser-248).

It belongs to the isochorismatase family. It depends on pantetheine 4'-phosphate as a cofactor.

It carries out the reaction isochorismate + H2O = (2S,3S)-2,3-dihydroxy-2,3-dihydrobenzoate + pyruvate. It functions in the pathway siderophore biosynthesis; vibriobactin biosynthesis. Its function is as follows. Involved in the biosynthesis of the catechol siderophore vibriobactin. Vibriobactin is a chelating compound involved in transporting iron from the bacterial environment into the cell cytoplasm. The chain is Vibriobactin-specific isochorismatase (vibB) from Vibrio cholerae serotype O1 (strain ATCC 39541 / Classical Ogawa 395 / O395).